Consider the following 363-residue polypeptide: Probable tRNA pseudouridine synthase D (363 aa).

Residue aspartate 82 is the Nucleophile of the active site. The TRUD domain maps to 151-363 (YLPAYIGYQR…IARTDPRLFT (213 aa)).

Belongs to the pseudouridine synthase TruD family.

The catalysed reaction is uridine(13) in tRNA = pseudouridine(13) in tRNA. Its function is as follows. Could be responsible for synthesis of pseudouridine from uracil-13 in transfer RNAs. In Sulfurisphaera tokodaii (strain DSM 16993 / JCM 10545 / NBRC 100140 / 7) (Sulfolobus tokodaii), this protein is Probable tRNA pseudouridine synthase D.